A 172-amino-acid polypeptide reads, in one-letter code: Small ribosomal subunit protein uS5 (172 aa).

An S5 DRBM domain is found at 17-80; sequence FTEKLIKLNR…ERAKRSMVLF (64 aa).

It belongs to the universal ribosomal protein uS5 family. As to quaternary structure, part of the 30S ribosomal subunit. Contacts proteins S4 and S8.

With S4 and S12 plays an important role in translational accuracy. Functionally, located at the back of the 30S subunit body where it stabilizes the conformation of the head with respect to the body. This chain is Small ribosomal subunit protein uS5, found in Treponema pallidum (strain Nichols).